Consider the following 515-residue polypeptide: Nectin-1 (515 aa).

Residues 1–30 form the signal peptide; that stretch reads MARMGLAGAAGRWWGLALGLTAFFLPGTHT. Residues 31–141 form the Ig-like V-type domain; sequence QVVQVNDSMY…GNRESQLNLT (111 aa). At 31 to 354 the chain is on the extracellular side; sequence QVVQVNDSMY…GRRAGQMPTA (324 aa). N-linked (GlcNAc...) asparagine glycans are attached at residues asparagine 36, asparagine 72, asparagine 139, asparagine 202, asparagine 286, asparagine 297, and asparagine 332. An intrachain disulfide couples cysteine 51 to cysteine 124. Ig-like C2-type domains follow at residues 145 to 243 and 247 to 334; these read KPTN…TLNV and PEVT…VNIT. 2 disulfide bridges follow: cysteine 172/cysteine 226 and cysteine 269/cysteine 316. The interval 282-299 is interaction with FGFR; it reads WTTLNGSLPKGVEAQNRT. The chain crosses the membrane as a helical span at residues 355-375; the sequence is IIGGVAGSVLLVLIVVGGIIV. Residues 376-515 are Cytoplasmic-facing; that stretch reads ALRRRRHTFK…SFISKKEWYV (140 aa). Residues 399-486 are disordered; the sequence is YSKAGIPQHH…DGYGDRTLGY (88 aa). Serine 421, serine 433, and serine 434 each carry phosphoserine. Tyrosine 435 is modified (phosphotyrosine). A compositionally biased stretch (basic and acidic residues) spans 447 to 464; the sequence is GERKVGGPHPKYDEDAKR. Serine 509 is modified (phosphoserine).

Belongs to the nectin family. In terms of assembly, cis- and trans-homodimer. Can form trans-heterodimers with NECTIN3 and with NECTIN4. Interaction between NECTIN1 and NECTIN3 on the pre- and postsynaptic sites, respectively, initiates the formation of puncta adherentia junctions between axons and dendrites. Interacts (via cytoplasmic domain) with AFDN (via PDZ domain); this interaction recruits NECTIN1 to cadherin-based adherens junctions and provides a connection with the actin cytoskeleton. Interacts with integrin alphaV/beta3. Interacts (via Ig-like C2-type domain 2) with FGFR1, FGFR2 and FGFR3. (Microbial infection) Interacts with herpes pseudorabies virus/PRV envelope glycoprotein D.

It localises to the cell membrane. The protein resides in the cell junction. It is found in the adherens junction. The protein localises to the presynaptic cell membrane. In terms of biological role, cell adhesion molecule that promotes cell-cell contacts and plays important roles in the development of the nervous system. Acts by forming homophilic or heterophilic trans-dimers. Heterophilic interactions have been detected between NECTIN1 and NECTIN3 and between NECTIN1 and NECTIN4. Involved in axon guidance by promoting contacts between the commissural axons and the floor plate cells. Involved in synaptogegesis. Has some neurite outgrowth-promoting activity. Promotes formation of checkerboard-like cellular pattern of hair cells and supporting cells in the auditory epithelium via heterophilic interaction with NECTIN3: NECTIN1 is present in the membrane of hair cells and associates with NECTIN3 on supporting cells, thereby mediating heterotypic adhesion between these two cell types. Required for enamel mineralization. (Microbial infection) Acts as a receptor for pseudorabies virus/PRV. The protein is Nectin-1 of Mus musculus (Mouse).